The primary structure comprises 384 residues: Trophoblast glycoprotein-like (384 aa).

An N-terminal signal peptide occupies residues 1–30 (MAPRAGQRGLWSPLPGLLLLAAALSRPAAP). Disulfide bonds link C31-C37 and C35-C47. Over 31 to 309 (CPFQCYCFGS…DVAGPELEAS (279 aa)) the chain is Extracellular. 5 LRR repeats span residues 61 to 84 (PPDA…AFAG), 95 to 118 (LPLL…AFDG), 119 to 142 (LPSL…AFRG), 173 to 196 (LAEL…ALRL), and 198 to 219 (RLEQ…ELSA). A glycan (N-linked (GlcNAc...) asparagine) is linked at N66. 2 disulfides stabilise this stretch: C240–C266 and C242–C287. Residues 310–330 (YVFFGLVLALIGLIFLMVLYL) form a helical membrane-spanning segment. The Cytoplasmic segment spans residues 331–384 (NRRGIQRWMHNLREACRDQMEGYHYRYEQDADPRRAPAPAAPAGSRATSPGSGL). Residues 361-384 (ADPRRAPAPAAPAGSRATSPGSGL) form a disordered region. The segment covering 367–384 (PAPAAPAGSRATSPGSGL) has biased composition (low complexity).

It is found in the membrane. The sequence is that of Trophoblast glycoprotein-like (Tpbgl) from Mus musculus (Mouse).